The sequence spans 212 residues: Large ribosomal subunit protein uL3 (212 aa).

A disordered region spans residues 147–166 (GSTGQNQSPGKVFKGKKMPG). Position 153 is an N5-methylglutamine (Q153).

Belongs to the universal ribosomal protein uL3 family. As to quaternary structure, part of the 50S ribosomal subunit. Forms a cluster with proteins L14 and L19. Methylated by PrmB.

One of the primary rRNA binding proteins, it binds directly near the 3'-end of the 23S rRNA, where it nucleates assembly of the 50S subunit. In Psychrobacter sp. (strain PRwf-1), this protein is Large ribosomal subunit protein uL3.